A 553-amino-acid polypeptide reads, in one-letter code: Methyl-coenzyme M reductase subunit alpha (553 aa).

Position 151 (Gln151) interacts with coenzyme F430. Coenzyme B is bound by residues Arg229, 260-261, and Arg274; that span reads KH. Tyr336 and Tyr447 together coordinate coenzyme M.

It belongs to the methyl-coenzyme M reductase alpha subunit family. MCR is a hexamer of two alpha, two beta, and two gamma chains, forming a dimer of heterotrimers. It depends on coenzyme F430 as a cofactor.

The protein resides in the cytoplasm. It carries out the reaction coenzyme B + methyl-coenzyme M = methane + coenzyme M-coenzyme B heterodisulfide. Its pathway is one-carbon metabolism; methyl-coenzyme M reduction; methane from methyl-coenzyme M: step 1/1. Functionally, component of the methyl-coenzyme M reductase (MCR) I that catalyzes the reductive cleavage of methyl-coenzyme M (CoM-S-CH3 or 2-(methylthio)ethanesulfonate) using coenzyme B (CoB or 7-mercaptoheptanoylthreonine phosphate) as reductant which results in the production of methane and the mixed heterodisulfide of CoB and CoM (CoM-S-S-CoB). This is the final step in methanogenesis. The polypeptide is Methyl-coenzyme M reductase subunit alpha (mcrA) (Methanococcus vannielii).